A 510-amino-acid chain; its full sequence is Maturase K (510 aa).

The protein belongs to the intron maturase 2 family. MatK subfamily.

Its subcellular location is the plastid. It localises to the chloroplast. Usually encoded in the trnK tRNA gene intron. Probably assists in splicing its own and other chloroplast group II introns. This Grahamia bracteata protein is Maturase K.